The sequence spans 319 residues: MVEAVKVSELVKDVPSLKIIEGKEYLSQKLIDTSDISRPGLELTGYFDFYPKNRIQLLGRTEISYSARLDHDLRERVFNKMATPETPCFIVSRGLPIPSEMLEAAEKEKIPVFSSNMATTHLSSVITQFLDEKLAPRKSIHGVLVEIYGMGVLIIGNSGVGKSETALDLVKRGHRLIADDRVDVYQKDDKTVVGEAPKILKHLMEIRGIGIIDVMNLFGAGAVKDSTEIQLIICLQNWDPKANYDRLGFNEKTREIFEVDVPQVTVPVKVGRNLAIIIEVAAMNFRAKKMGYDASQKFEQNLTELISDNSKKDEGESKK.

Active-site residues include H141 and K162. Residue 156–163 participates in ATP binding; that stretch reads GNSGVGKS. S163 is a binding site for Mg(2+). The Proton acceptor; for phosphorylation activity. Proton donor; for dephosphorylation activity role is filled by D180. The interval 204 to 213 is important for the catalytic mechanism of both phosphorylation and dephosphorylation; it reads MEIRGIGIID. E205 contacts Mg(2+). R246 is a catalytic residue. The interval 267-272 is important for the catalytic mechanism of dephosphorylation; the sequence is PVKVGR.

Belongs to the HPrK/P family. In terms of assembly, homohexamer. Requires Mg(2+) as cofactor.

It carries out the reaction [HPr protein]-L-serine + ATP = [HPr protein]-O-phospho-L-serine + ADP + H(+). It catalyses the reaction [HPr protein]-O-phospho-L-serine + phosphate + H(+) = [HPr protein]-L-serine + diphosphate. Functionally, catalyzes the ATP- as well as the pyrophosphate-dependent phosphorylation of a specific serine residue in HPr, a phosphocarrier protein of the phosphoenolpyruvate-dependent sugar phosphotransferase system (PTS). HprK/P also catalyzes the pyrophosphate-producing, inorganic phosphate-dependent dephosphorylation (phosphorolysis) of seryl-phosphorylated HPr (P-Ser-HPr). The two antagonistic activities of HprK/P are regulated by several intracellular metabolites, which change their concentration in response to the absence or presence of rapidly metabolisable carbon sources (glucose, fructose, etc.) in the growth medium. Therefore, by controlling the phosphorylation state of HPr, HPrK/P is a sensor enzyme that plays a major role in the regulation of carbon metabolism and sugar transport: it mediates carbon catabolite repression (CCR), and regulates PTS-catalyzed carbohydrate uptake and inducer exclusion. This is HPr kinase/phosphorylase from Lactobacillus gasseri (strain ATCC 33323 / DSM 20243 / BCRC 14619 / CIP 102991 / JCM 1131 / KCTC 3163 / NCIMB 11718 / NCTC 13722 / AM63).